Consider the following 206-residue polypeptide: Triosephosphate isomerase (206 aa).

His76 functions as the Electrophile in the catalytic mechanism. The active-site Proton acceptor is the Glu146.

It belongs to the triosephosphate isomerase family. In terms of assembly, homodimer.

The catalysed reaction is D-glyceraldehyde 3-phosphate = dihydroxyacetone phosphate. The protein operates within carbohydrate biosynthesis; gluconeogenesis. It functions in the pathway carbohydrate degradation; glycolysis; D-glyceraldehyde 3-phosphate from glycerone phosphate: step 1/1. This is Triosephosphate isomerase (Tpi) from Aedes togoi (Mosquito).